The following is a 553-amino-acid chain: Undecaprenyl phosphate-alpha-4-amino-4-deoxy-L-arabinose arabinosyl transferase (553 aa).

12 consecutive transmembrane segments (helical) span residues 8–28 (LLFS…RALW), 81–101 (FAVR…VYWL), 113–133 (LLSA…SYAV), 136–156 (PMVT…AQSA), 176–196 (LMTK…PWMI), 204–224 (LLLF…PWAI), 255–275 (APFW…VGLL), 289–309 (NSGS…FSLA), 313–333 (LPTY…HHGI), 351–371 (VAFG…WGLV), 384–404 (VLLG…CLVA), and 412–432 (AALC…DKVI).

It belongs to the glycosyltransferase 83 family.

The protein localises to the cell inner membrane. It carries out the reaction 4-amino-4-deoxy-alpha-L-arabinopyranosyl di-trans,octa-cis-undecaprenyl phosphate + lipid IVA = lipid IIA + di-trans,octa-cis-undecaprenyl phosphate.. Its pathway is lipopolysaccharide metabolism; 4-amino-4-deoxy-beta-L-arabinose-lipid A biosynthesis. Catalyzes the transfer of the L-Ara4N moiety of the glycolipid undecaprenyl phosphate-alpha-L-Ara4N to lipid A. The modified arabinose is attached to lipid A and is required for resistance to polymyxin and cationic antimicrobial peptides. The chain is Undecaprenyl phosphate-alpha-4-amino-4-deoxy-L-arabinose arabinosyl transferase from Erwinia tasmaniensis (strain DSM 17950 / CFBP 7177 / CIP 109463 / NCPPB 4357 / Et1/99).